Reading from the N-terminus, the 267-residue chain is U6 snRNA phosphodiesterase 1 (267 aa).

Positions 1–13 (MSSAPLVGYSSSG) are enriched in polar residues. The tract at residues 1 to 74 (MSSAPLVGYS…DSAKHGGRIR (74 aa)) is disordered. H122 acts as the Proton acceptor in catalysis. 122 to 124 (HVS) contacts AMP. Residues Q166, Y204, and 208 to 212 (SFHIS) contribute to the UMP site. AMP is bound by residues Y204 and 206-212 (DPSFHIS). Residue H210 is the Proton donor of the active site.

It belongs to the 2H phosphoesterase superfamily. USB1 family. Interacts with PLRG1, CDC5L and PRPF19.

The protein localises to the nucleus. It carries out the reaction a 3'-end uridylyl-uridine-RNA = a 3'-end 2',3'-cyclophospho-uridine-RNA + uridine. It catalyses the reaction a 3'-end uridylyl-adenosine-RNA = a 3'-end 2',3'-cyclophospho-uridine-RNA + adenosine. Functionally, 3'-5' RNA exonuclease that trims the 3' end of oligo(U) and oligo(A) tracts of the pre-U6 small nuclear RNA (snRNA) molecule, leading to the formation of a mature U6 snRNA 3' end-terminated with a 2',3'-cyclic phosphate. Participates in the U6 snRNA 3' end processing that prevents U6 snRNA degradation. In addition also removes uridines from the 3' end of U6atac snRNA and possibly the vault RNA VTRNA1-1. The protein is U6 snRNA phosphodiesterase 1 of Mus musculus (Mouse).